The sequence spans 423 residues: Glutamine synthetase, chloroplastic (423 aa).

The N-terminal 51 residues, 1 to 51, are a transit peptide targeting the chloroplast; that stretch reads MAQAVVPAMQCRVGVKAAAGRVWSAGRTRTGRGGASPGFKVMAVSTGSTGV. One can recognise a GS beta-grasp domain in the interval 70-150; the sequence is VIAEYIWVGG…VICDTYTPQG (81 aa). The interval 89–115 is disordered; sequence RTISKPVEDPSELPKWNYDGSSTGQAP. The region spanning 154-423 is the GS catalytic domain; it reads PTNKRHRAAQ…LAAKKLALKV (270 aa).

It belongs to the glutamine synthetase family. In terms of assembly, homooctamer.

It is found in the plastid. Its subcellular location is the chloroplast. The catalysed reaction is L-glutamate + NH4(+) + ATP = L-glutamine + ADP + phosphate + H(+). Functionally, the light-modulated chloroplast enzyme, encoded by a nuclear gene and expressed primarily in leaves, is responsible for the reassimilation of the ammonia generated by photorespiration. This is Glutamine synthetase, chloroplastic (GLN2) from Zea mays (Maize).